The chain runs to 160 residues: Troponin C, isoform 2 (160 aa).

4 EF-hand domains span residues 15–50 (DQIE…MGQA), 51–86 (FEER…FVVN), 92–127 (GLEE…LDDN), and 128–160 (VSEE…MSGE). Residues D64, D66, S68, E70, and E75 each coordinate Ca(2+). Positions 141, 143, 145, 147, and 152 each coordinate Ca(2+).

This sequence belongs to the troponin C family. Pharyngeal muscle.

The protein is Troponin C, isoform 2 (tnc-2) of Caenorhabditis elegans.